A 333-amino-acid polypeptide reads, in one-letter code: Testin-2 (333 aa).

Positions 1–17 are cleaved as a signal peptide; the sequence is MIAVLFLAILCLEIDST. Intrachain disulfides connect Cys135/Cys178, Cys169/Cys211, and Cys269/Cys322. The N-linked (GlcNAc...) asparagine glycan is linked to Asn173. Active-site residues include His276 and Asn300.

The protein belongs to the peptidase C1 family. In terms of tissue distribution, expressed in testis and ovary. Low level in spleen, epididymis, kidney, and uterus. Expressed in primary cultures of Sertoli cells.

The protein localises to the secreted. The sequence is that of Testin-2 from Mus musculus (Mouse).